The primary structure comprises 150 residues: Lipoprotein signal peptidase (150 aa).

Transmembrane regions (helical) follow at residues 5–25 (LSLVIIVVGIIADQVFKNWVV), 59–79 (QQWFFLVLTPIVLIVALWFLW), and 83–103 (GQNWYFAGLTLIIAGALGNFI). Catalysis depends on residues aspartate 113 and aspartate 129. A helical membrane pass occupies residues 124 to 144 (IFNIADILLSVGFVVLFIAIL).

Belongs to the peptidase A8 family.

Its subcellular location is the cell membrane. It catalyses the reaction Release of signal peptides from bacterial membrane prolipoproteins. Hydrolyzes -Xaa-Yaa-Zaa-|-(S,diacylglyceryl)Cys-, in which Xaa is hydrophobic (preferably Leu), and Yaa (Ala or Ser) and Zaa (Gly or Ala) have small, neutral side chains.. The protein operates within protein modification; lipoprotein biosynthesis (signal peptide cleavage). In terms of biological role, this protein specifically catalyzes the removal of signal peptides from prolipoproteins. The polypeptide is Lipoprotein signal peptidase (Lactococcus lactis subsp. cremoris (strain MG1363)).